Here is a 107-residue protein sequence, read N- to C-terminus: Nucleoid-associated protein GbCGDNIH1_0260 (107 aa).

This sequence belongs to the YbaB/EbfC family. In terms of assembly, homodimer.

The protein localises to the cytoplasm. It localises to the nucleoid. In terms of biological role, binds to DNA and alters its conformation. May be involved in regulation of gene expression, nucleoid organization and DNA protection. The polypeptide is Nucleoid-associated protein GbCGDNIH1_0260 (Granulibacter bethesdensis (strain ATCC BAA-1260 / CGDNIH1)).